We begin with the raw amino-acid sequence, 215 residues long: Guanylate kinase (215 aa).

The 179-residue stretch at 11 to 189 (GNVFMVVAPS…ALTELVQIIS (179 aa)) folds into the Guanylate kinase-like domain. 18–25 (APSGAGKS) lines the ATP pocket.

Belongs to the guanylate kinase family.

The protein localises to the cytoplasm. It catalyses the reaction GMP + ATP = GDP + ADP. Essential for recycling GMP and indirectly, cGMP. This is Guanylate kinase from Bordetella bronchiseptica (strain ATCC BAA-588 / NCTC 13252 / RB50) (Alcaligenes bronchisepticus).